Consider the following 393-residue polypeptide: Chorismate synthase (393 aa).

2 residues coordinate NADP(+): R40 and R46. FMN-binding positions include 129-131, 250-251, G301, 316-320, and R342; these read RAS, QA, and KPIST.

Belongs to the chorismate synthase family. Homotetramer. Requires FMNH2 as cofactor.

It catalyses the reaction 5-O-(1-carboxyvinyl)-3-phosphoshikimate = chorismate + phosphate. It functions in the pathway metabolic intermediate biosynthesis; chorismate biosynthesis; chorismate from D-erythrose 4-phosphate and phosphoenolpyruvate: step 7/7. In terms of biological role, catalyzes the anti-1,4-elimination of the C-3 phosphate and the C-6 proR hydrogen from 5-enolpyruvylshikimate-3-phosphate (EPSP) to yield chorismate, which is the branch point compound that serves as the starting substrate for the three terminal pathways of aromatic amino acid biosynthesis. This reaction introduces a second double bond into the aromatic ring system. The protein is Chorismate synthase of Acidobacterium capsulatum (strain ATCC 51196 / DSM 11244 / BCRC 80197 / JCM 7670 / NBRC 15755 / NCIMB 13165 / 161).